The following is a 347-amino-acid chain: Phosphate acyltransferase (347 aa).

The protein belongs to the PlsX family. Homodimer. Probably interacts with PlsY.

The protein resides in the cytoplasm. The enzyme catalyses a fatty acyl-[ACP] + phosphate = an acyl phosphate + holo-[ACP]. Its pathway is lipid metabolism; phospholipid metabolism. Its function is as follows. Catalyzes the reversible formation of acyl-phosphate (acyl-PO(4)) from acyl-[acyl-carrier-protein] (acyl-ACP). This enzyme utilizes acyl-ACP as fatty acyl donor, but not acyl-CoA. The sequence is that of Phosphate acyltransferase from Methylobacillus flagellatus (strain ATCC 51484 / DSM 6875 / VKM B-1610 / KT).